A 436-amino-acid chain; its full sequence is C4-dicarboxylate transport protein 2 (436 aa).

A run of 9 helical transmembrane segments spans residues 14–34, 45–65, 77–97, 142–162, 198–218, 223–243, 290–310, 331–351, and 353–373; these read VLVAIAIGIALGHWYPETAVA, LIKMAIAPIIFCTVVTGIAGM, MALLYFEIVSTVALIIGLVVV, VVGAFANGDILQVLFFSVLFG, PIGAFGAMAFTIGAYGVGSLV, LMLCFYITCLLFVLIVLGGIA, VVGLVIPTGYSFNLDGTSIYL, ITLLLVLLIASKGAAGVTGSG, and IVLAATLSAVGHLPVAGLALI. A disordered region spans residues 414–436; it reads ELAGEGNASSPASDIPVGGREAV.

This sequence belongs to the dicarboxylate/amino acid:cation symporter (DAACS) (TC 2.A.23) family.

Its subcellular location is the cell inner membrane. Its function is as follows. Responsible for the transport of dicarboxylates such as succinate, fumarate, and malate from the periplasm across the membrane. In Pseudomonas paraeruginosa (strain DSM 24068 / PA7) (Pseudomonas aeruginosa (strain PA7)), this protein is C4-dicarboxylate transport protein 2.